Reading from the N-terminus, the 360-residue chain is Tryptophan--tRNA ligase, mitochondrial (360 aa).

A mitochondrion-targeting transit peptide spans 1 to 18 (MALHSMRKARERWSFIRA). Residues Gln42 and 48–51 (HLGN) each bind ATP. Asp167 serves as a coordination point for L-tryptophan. ATP is bound by residues 179 to 181 (GED), Val217, and 226 to 230 (KMSKS).

Belongs to the class-I aminoacyl-tRNA synthetase family. Brain.

Its subcellular location is the mitochondrion matrix. It localises to the mitochondrion. It carries out the reaction tRNA(Trp) + L-tryptophan + ATP = L-tryptophyl-tRNA(Trp) + AMP + diphosphate + H(+). Functionally, catalyzes the attachment of tryptophan to tRNA(Trp) in a two-step reaction: tryptophan is first activated by ATP to form Trp-AMP and then transferred to the acceptor end of tRNA(Trp). The protein is Tryptophan--tRNA ligase, mitochondrial (WARS2) of Homo sapiens (Human).